The primary structure comprises 349 residues: Protein RecA (349 aa).

Residue 65–72 (GPESSGKT) participates in ATP binding.

This sequence belongs to the RecA family.

The protein localises to the cytoplasm. Functionally, can catalyze the hydrolysis of ATP in the presence of single-stranded DNA, the ATP-dependent uptake of single-stranded DNA by duplex DNA, and the ATP-dependent hybridization of homologous single-stranded DNAs. It interacts with LexA causing its activation and leading to its autocatalytic cleavage. In Azotobacter vinelandii, this protein is Protein RecA.